The primary structure comprises 534 residues: Acetyltransferase MATC1 (534 aa).

Active-site proton acceptor residues include His-186 and Asp-459.

Belongs to the plant acyltransferase family.

The protein localises to the cell membrane. It participates in secondary metabolite biosynthesis. In terms of biological role, acetyltransferase; part of the gene cluster that mediates the biosynthesis of mannosylerythritol lipids (MELs), surface-active substances that enhance the availability of water-insoluble substrates. Mannosylerythritol lipid production is responsible for hemolytic activity of Ustilago maydis. Depending on the number of acetyl groups, mannosylerythritol lipids can be differentiated into MEL A (fully acetylated), MEL B and MEL C (monoacetylated at R-6 and R-4, respectively), and the fully deacetylated MEL D. The first step in the pathway is the generation of mannosylerythritol by the glycosyltransferase EMT1 which catalyzes the transfer of GDP-mannose to the C-4 atom of meso-erythritol. This reaction has to be stereospecific, since only mannosyl-D-erythritol is generated. The produced disaccharide is subsequently acylated with fatty acids of various lengths derived from the peroxisomal beta-oxidation by the peroxisomal acyltransferases MAC1 and MAC2 at positions C-2 and C-3, repectively. The existence of MEL derivatives which carry an acetyl group at C-2 implies that at least MAC1 also accepts acetyl-CoA as a donor. The final step of MEL biosynthesis is the acetylation of the fully acylated mannosylerythritol lipids catalyzed by the acetyl-CoA-dependent acetyltransferase MAT1. MAT1 displays a relaxed regioselectivity and is able to transfer acetylgroups to both positions C-4 and C-6 of the mannosyl moiety. The chain is Acetyltransferase MATC1 from Mycosarcoma maydis (Corn smut fungus).